A 115-amino-acid chain; its full sequence is uncharacterized protein (115 aa).

A run of 2 helical transmembrane segments spans residues 15-35 and 52-72; these read FSTQVVCSPSGAALFCFEVLF and FDGVAILLLLILLSLSNYYSI.

It is found in the membrane. This is an uncharacterized protein from Saccharomyces cerevisiae (strain ATCC 204508 / S288c) (Baker's yeast).